Consider the following 269-residue polypeptide: Hydroxyethylthiazole kinase (269 aa).

Position 45 (M45) interacts with substrate. ATP is bound by residues R121 and T167. G194 lines the substrate pocket.

Belongs to the Thz kinase family. Mg(2+) is required as a cofactor.

The catalysed reaction is 5-(2-hydroxyethyl)-4-methylthiazole + ATP = 4-methyl-5-(2-phosphooxyethyl)-thiazole + ADP + H(+). Its pathway is cofactor biosynthesis; thiamine diphosphate biosynthesis; 4-methyl-5-(2-phosphoethyl)-thiazole from 5-(2-hydroxyethyl)-4-methylthiazole: step 1/1. Its function is as follows. Catalyzes the phosphorylation of the hydroxyl group of 4-methyl-5-beta-hydroxyethylthiazole (THZ). The chain is Hydroxyethylthiazole kinase from Geobacillus sp. (strain WCH70).